The sequence spans 39 residues: Cytochrome b559 subunit beta (39 aa).

Residues 14–30 (WLAIHGLAVPTVSFLGS) traverse the membrane as a helical segment. Histidine 18 provides a ligand contact to heme.

It belongs to the PsbE/PsbF family. Heterodimer of an alpha subunit and a beta subunit. PSII is composed of 1 copy each of membrane proteins PsbA, PsbB, PsbC, PsbD, PsbE, PsbF, PsbH, PsbI, PsbJ, PsbK, PsbL, PsbM, PsbT, PsbX, PsbY, PsbZ, Psb30/Ycf12, at least 3 peripheral proteins of the oxygen-evolving complex and a large number of cofactors. It forms dimeric complexes. It depends on heme b as a cofactor.

The protein localises to the plastid. Its subcellular location is the chloroplast thylakoid membrane. This b-type cytochrome is tightly associated with the reaction center of photosystem II (PSII). PSII is a light-driven water:plastoquinone oxidoreductase that uses light energy to abstract electrons from H(2)O, generating O(2) and a proton gradient subsequently used for ATP formation. It consists of a core antenna complex that captures photons, and an electron transfer chain that converts photonic excitation into a charge separation. This chain is Cytochrome b559 subunit beta, found in Allium textile (Textile onion).